Here is a 230-residue protein sequence, read N- to C-terminus: MAKLTKRAQMLREKVDTSKVYNLEDAVALLSEVSTVKFKESVEVSINLGVDPRKSDQVVRGATVMPNGTGKDARVAVFAQGAAADAAKEAGADVVGMEDLAEEVKKGNLDFDVVVAAPDAMRVVGQLGQILGPRGLMPNPKVGTVTPDVATAVKNAKAGQVRFRTDKNGIIHAAIGKVDFDASAIKGNLDALVGDLKRLKPSTSKGVYFKKITLSTTMGPGLTVDHSAYV.

The protein belongs to the universal ribosomal protein uL1 family. As to quaternary structure, part of the 50S ribosomal subunit.

Functionally, binds directly to 23S rRNA. The L1 stalk is quite mobile in the ribosome, and is involved in E site tRNA release. In terms of biological role, protein L1 is also a translational repressor protein, it controls the translation of the L11 operon by binding to its mRNA. The sequence is that of Large ribosomal subunit protein uL1 from Chromohalobacter salexigens (strain ATCC BAA-138 / DSM 3043 / CIP 106854 / NCIMB 13768 / 1H11).